Consider the following 448-residue polypeptide: Putative sodium-coupled neutral amino acid transporter 11 (448 aa).

The disordered stretch occupies residues Met1–Ser20. The next 11 membrane-spanning stretches (helical) occupy residues Val22–Pro42, Met52–Val72, Ile94–Tyr114, Phe143–Ala163, Leu165–Val185, Ala200–Ile220, Ile246–Phe266, Thr286–Val306, Ser324–Tyr344, Cys346–Phe366, and Met389–Pro409. Asn425, Asn440, and Asn444 each carry an N-linked (GlcNAc...) asparagine glycan.

The protein belongs to the amino acid/polyamine transporter 2 family.

It is found in the membrane. Putative sodium-dependent amino acid/proton antiporter. The protein is Putative sodium-coupled neutral amino acid transporter 11 (slc38a11) of Danio rerio (Zebrafish).